Consider the following 1828-residue polypeptide: Separin (1828 aa).

Residues 1647 to 1741 (KEAGSYILNP…SGALYECGSF (95 aa)) enclose the Peptidase C50 domain. The active site involves C1730.

Interacts with cut2. Interacts with rad21.

The protein resides in the cytoplasm. It is found in the nucleus. It carries out the reaction All bonds known to be hydrolyzed by this endopeptidase have arginine in P1 and an acidic residue in P4. P6 is often occupied by an acidic residue or by a hydroxy-amino-acid residue, the phosphorylation of which enhances cleavage.. Its activity is regulated as follows. It is inactivated via its interaction with cut2, which probably covers its active site. Cut2 degradation at anaphase, liberates it and triggers rad21 cleavage. Its function is as follows. Caspase-like protease, which plays a central role in the chromosome segregation by cleaving the rad21 subunit of the cohesin complex at the onset of anaphase. During most of the cell cycle, it is inactivated by securin/cut2 protein. It is also required for pointed nuclear formation. The protein is Separin (cut1) of Schizosaccharomyces pombe (strain 972 / ATCC 24843) (Fission yeast).